Reading from the N-terminus, the 382-residue chain is Fetuin-B (382 aa).

The N-terminal stretch at 1-15 (MGLLLPLALCILVLC) is a signal peptide. 2 consecutive Cystatin fetuin-B-type domains span residues 25 to 138 (ALNP…YNCT) and 149 to 255 (MTCP…VTCD). N-linked (GlcNAc...) asparagine glycosylation is present at Asn37. Intrachain disulfides connect Cys93–Cys104, Cys117–Cys137, and Cys151–Cys154. Residue Asn136 is glycosylated (N-linked (GlcNAc...) asparagine). Asn182 is a glycosylation site (N-linked (GlcNAc...) asparagine). 2 disulfides stabilise this stretch: Cys216–Cys224 and Cys237–Cys254. 2 stretches are compositionally biased toward polar residues: residues 262–276 (PATG…QKPT) and 286–295 (QKNTPPTDSP). 2 disordered regions span residues 262–320 (PATG…EKGP) and 363–382 (ARTA…VLPP). O-linked (GalNAc...) threonine glycosylation is found at Thr289 and Thr292. Over residues 310–320 (LDDKNSQEKGP) the composition is skewed to basic and acidic residues. Phosphoserine is present on Ser315.

It belongs to the fetuin family. In terms of tissue distribution, liver and testis.

It is found in the secreted. Protease inhibitor required for egg fertilization. Required to prevent premature zona pellucida hardening before fertilization, probably by inhibiting the protease activity of ASTL, a protease that mediates the cleavage of ZP2 and triggers zona pellucida hardening. The chain is Fetuin-B (FETUB) from Homo sapiens (Human).